Reading from the N-terminus, the 81-residue chain is Photosystem I iron-sulfur center (81 aa).

4Fe-4S ferredoxin-type domains are found at residues 2–31 (AHSV…MVPW) and 39–68 (IASA…VRVY). Positions 11, 14, 17, 21, 48, 51, 54, and 58 each coordinate [4Fe-4S] cluster.

The eukaryotic PSI reaction center is composed of at least 11 subunits. [4Fe-4S] cluster is required as a cofactor.

The protein resides in the plastid. It localises to the chloroplast thylakoid membrane. It catalyses the reaction reduced [plastocyanin] + hnu + oxidized [2Fe-2S]-[ferredoxin] = oxidized [plastocyanin] + reduced [2Fe-2S]-[ferredoxin]. Its function is as follows. Apoprotein for the two 4Fe-4S centers FA and FB of photosystem I (PSI); essential for photochemical activity. FB is the terminal electron acceptor of PSI, donating electrons to ferredoxin. The C-terminus interacts with PsaA/B/D and helps assemble the protein into the PSI complex. Required for binding of PsaD and PsaE to PSI. PSI is a plastocyanin-ferredoxin oxidoreductase, converting photonic excitation into a charge separation, which transfers an electron from the donor P700 chlorophyll pair to the spectroscopically characterized acceptors A0, A1, FX, FA and FB in turn. In Physcomitrium patens (Spreading-leaved earth moss), this protein is Photosystem I iron-sulfur center.